A 249-amino-acid chain; its full sequence is Dof zinc finger protein DOF4.5 (249 aa).

The Dof-type zinc-finger motif lies at 25–79 (RVCARCDSDNTKFCYYNNYCEFQPRYFCKNCRRYWTHGGALRNIPIGGSSRAKRA). Residues C27, C30, C52, and C55 each contribute to the Zn(2+) site.

The protein localises to the nucleus. In terms of biological role, transcription factor that binds specifically to a 5'-AA[AG]G-3' consensus core sequence. This chain is Dof zinc finger protein DOF4.5 (DOF4.5), found in Arabidopsis thaliana (Mouse-ear cress).